Consider the following 1044-residue polypeptide: Phosphatidylinositol 4,5-bisphosphate 3-kinase catalytic subunit delta isoform (1044 aa).

The PI3K-ABD domain occupies 16 to 105; that stretch reads ENQSVVVDFL…LPVLRLVARE (90 aa). A PI3K-RBD domain is found at 187–278; that stretch reads NRALLVNVKF…GLTPHLTMVH (92 aa). Residues 287–312 form a disordered region; sequence DEQSNPAPQVQKPRAKPPPIPAKKPS. In terms of domain architecture, C2 PI3K-type spans 319–476; it reads LEQPFRIELI…SAAALLICLP (158 aa). The PIK helical domain occupies 497–674; that stretch reads HSECVHVTEE…GLILEAYCRG (178 aa). Phosphotyrosine is present on tyrosine 524. The PI3K/PI4K catalytic domain occupies 745-1027; the sequence is CVEQCTFMDS…KFNEALRESW (283 aa). The segment at 751-757 is G-loop; the sequence is FMDSKMK. Positions 890–898 are catalytic loop; sequence GIGDRHSDN. Residues 909–935 form an activation loop region; sequence HIDFGHFLGNFKTKFGINRERVPFILT. Serine 1039 is subject to Phosphoserine; by autocatalysis.

The protein belongs to the PI3/PI4-kinase family. In terms of assembly, heterodimer of a catalytic subunit PIK3CD and a p85 regulatory subunit (PIK3R1, PIK3R2 or PIK3R3). Interacts with ERAS. Interacts with HRAS. In terms of processing, autophosphorylation on Ser-1039 results in the almost complete inactivation of the lipid kinase activity. As to expression, in humans, the highest levels of expression are seen in peripheral blood mononuclear cells, spleen, and thymus, and low levels of expression in testes, uterus, colon, and small intestine but not in other tissues examined including prostate, heart, brain, and liver. Isoform 2 is expressed in normal thymus, lung and spleen tissues, and is detected at low levels in normal lysates from colon and ovarian biopsies, at elevated levels in lysates from colorectal tumors and is abundantly expressed in some ovarian tumors (at protein level). Both isoform 1 and isoform 2 are widely expressed. Isoform 1 is expressed predominantly in leukocytes.

It is found in the cytoplasm. It carries out the reaction a 1,2-diacyl-sn-glycero-3-phospho-(1D-myo-inositol-4,5-bisphosphate) + ATP = a 1,2-diacyl-sn-glycero-3-phospho-(1D-myo-inositol-3,4,5-trisphosphate) + ADP + H(+). The enzyme catalyses a 1,2-diacyl-sn-glycero-3-phospho-(1D-myo-inositol) + ATP = a 1,2-diacyl-sn-glycero-3-phospho-(1D-myo-inositol-3-phosphate) + ADP + H(+). It catalyses the reaction 1-octadecanoyl-2-(5Z,8Z,11Z,14Z)-eicosatetraenoyl-sn-glycero-3-phospho-1D-myo-inositol 4,5-bisphosphate + ATP = 1-octadecanoyl-2-(5Z,8Z,11Z,14Z-eicosatetraenoyl)-sn-glycero-3-phospho-(1D-myo-inositol 3,4,5-triphosphate) + ADP + H(+). It functions in the pathway phospholipid metabolism; phosphatidylinositol phosphate biosynthesis. Its activity is regulated as follows. Activated by growth factors and cytokine receptors through a tyrosine-kinase-dependent mechanism. Activated by RAS. IC87114 inhibits lipid kinase activity and is selective in cells at doses up to 5-10 uM. IC87114 blocks T-cell receptor signaling in naive and memory T-cells and reduces cytokine production by memory T-cells. Functionally, phosphoinositide-3-kinase (PI3K) phosphorylates phosphatidylinositol (PI) and its phosphorylated derivatives at position 3 of the inositol ring to produce 3-phosphoinositides. Uses ATP and PtdIns(4,5)P2 (phosphatidylinositol 4,5-bisphosphate) to generate phosphatidylinositol 3,4,5-trisphosphate (PIP3). PIP3 plays a key role by recruiting PH domain-containing proteins to the membrane, including AKT1 and PDPK1, activating signaling cascades involved in cell growth, survival, proliferation, motility and morphology. Mediates immune responses. Plays a role in B-cell development, proliferation, migration, and function. Required for B-cell receptor (BCR) signaling. Mediates B-cell proliferation response to anti-IgM, anti-CD40 and IL4 stimulation. Promotes cytokine production in response to TLR4 and TLR9. Required for antibody class switch mediated by TLR9. Involved in the antigen presentation function of B-cells. Involved in B-cell chemotaxis in response to CXCL13 and sphingosine 1-phosphate (S1P). Required for proliferation, signaling and cytokine production of naive, effector and memory T-cells. Required for T-cell receptor (TCR) signaling. Mediates TCR signaling events at the immune synapse. Activation by TCR leads to antigen-dependent memory T-cell migration and retention to antigenic tissues. Together with PIK3CG participates in T-cell development. Contributes to T-helper cell expansion and differentiation. Required for T-cell migration mediated by homing receptors SELL/CD62L, CCR7 and S1PR1 and antigen dependent recruitment of T-cells. Together with PIK3CG is involved in natural killer (NK) cell development and migration towards the sites of inflammation. Participates in NK cell receptor activation. Plays a role in NK cell maturation and cytokine production. Together with PIK3CG is involved in neutrophil chemotaxis and extravasation. Together with PIK3CG participates in neutrophil respiratory burst. Plays important roles in mast-cell development and mast cell mediated allergic response. Involved in stem cell factor (SCF)-mediated proliferation, adhesion and migration. Required for allergen-IgE-induced degranulation and cytokine release. The lipid kinase activity is required for its biological function. Isoform 2 may be involved in stabilizing total RAS levels, resulting in increased ERK phosphorylation and increased PI3K activity. The sequence is that of Phosphatidylinositol 4,5-bisphosphate 3-kinase catalytic subunit delta isoform (PIK3CD) from Homo sapiens (Human).